Consider the following 213-residue polypeptide: LexA repressor 2 (213 aa).

Positions 27-47 (QTEIARAFGFKGVRAAQYHLE) form a DNA-binding region, H-T-H motif. Active-site for autocatalytic cleavage activity residues include Ser-133 and Lys-170.

This sequence belongs to the peptidase S24 family. As to quaternary structure, homodimer.

It carries out the reaction Hydrolysis of Ala-|-Gly bond in repressor LexA.. Functionally, represses a number of genes involved in the response to DNA damage (SOS response), including recA and lexA. In the presence of single-stranded DNA, RecA interacts with LexA causing an autocatalytic cleavage which disrupts the DNA-binding part of LexA, leading to derepression of the SOS regulon and eventually DNA repair. In Xanthomonas campestris pv. campestris (strain ATCC 33913 / DSM 3586 / NCPPB 528 / LMG 568 / P 25), this protein is LexA repressor 2.